A 610-amino-acid chain; its full sequence is C4b-binding protein alpha chain (610 aa).

A signal peptide spans 1–48 (MKHQRVPVMILHSKGTMASWPFSRLWSISDPILFQVTLVATLLATVLG). Sushi domains lie at 49–109 (SCGI…FCVK), 110–171 (KRCE…QCII), 172–236 (AKCE…SCKK), 237–296 (VICV…TCEL), 297–364 (NGCL…ECKE), 365–427 (VCCP…ECRP), 428–485 (DCKS…QCKA), and 486–543 (LCLK…KCEW). 16 cysteine pairs are disulfide-bonded: Cys-50/Cys-95, Cys-80/Cys-107, Cys-112/Cys-153, Cys-139/Cys-169, Cys-174/Cys-217, Cys-203/Cys-234, Cys-239/Cys-281, Cys-267/Cys-294, Cys-299/Cys-350, Cys-334/Cys-362, Cys-367/Cys-412, Cys-402/Cys-425, Cys-429/Cys-471, Cys-457/Cys-483, Cys-487/Cys-528, and Cys-514/Cys-541. A glycan (N-linked (GlcNAc...) asparagine) is linked at Asn-66. Residue Asn-221 is glycosylated (N-linked (GlcNAc...) asparagine). Residues Asn-525 and Asn-602 are each glycosylated (N-linked (GlcNAc...) asparagine).

In terms of assembly, disulfide-linked complex of alpha and beta chains.

It localises to the secreted. Its function is as follows. Controls the classical pathway of complement activation. It binds as a cofactor to C3b/C4b inactivator (C3bINA), which then hydrolyzes the complement fragment C4b. It also accelerates the degradation of the C4bC2a complex (C3 convertase) by dissociating the complement fragment C2a. Alpha chain binds C4b. It also interacts with serum amyloid P component. This is C4b-binding protein alpha chain (C4BPA) from Bos taurus (Bovine).